Reading from the N-terminus, the 304-residue chain is Large ribosomal subunit protein uL18 (304 aa).

Residues 285–304 are disordered; it reads LNALNSSAGADDDDEEEDDE. Residues 294 to 304 are compositionally biased toward acidic residues; sequence ADDDDEEEDDE.

The protein belongs to the universal ribosomal protein uL18 family. Component of the large ribosomal subunit (LSU).

The protein localises to the cytoplasm. It localises to the nucleus. Functionally, component of the ribosome, a large ribonucleoprotein complex responsible for the synthesis of proteins in the cell. The small ribosomal subunit (SSU) binds messenger RNAs (mRNAs) and translates the encoded message by selecting cognate aminoacyl-transfer RNA (tRNA) molecules. The large subunit (LSU) contains the ribosomal catalytic site termed the peptidyl transferase center (PTC), which catalyzes the formation of peptide bonds, thereby polymerizing the amino acids delivered by tRNAs into a polypeptide chain. The nascent polypeptides leave the ribosome through a tunnel in the LSU and interact with protein factors that function in enzymatic processing, targeting, and the membrane insertion of nascent chains at the exit of the ribosomal tunnel. The polypeptide is Large ribosomal subunit protein uL18 (RPL5A) (Oryza sativa subsp. indica (Rice)).